The chain runs to 198 residues: 5'-deoxynucleotidase hdd1 (198 aa).

The 107-residue stretch at 38-144 folds into the HD domain; sequence IADHMYRMGI…VKDIDKFEMI (107 aa). A divalent metal cation is bound by residues His41, His69, Asp70, Glu73, Asp78, Ile79, and Asp139.

This sequence belongs to the HDDC2 family. As to quaternary structure, homodimer. The cofactor is Mn(2+). It depends on Co(2+) as a cofactor. Mg(2+) is required as a cofactor.

The protein resides in the cytoplasm. Its subcellular location is the nucleus. The enzyme catalyses a 2'-deoxyribonucleoside 5'-phosphate + H2O = a 2'-deoxyribonucleoside + phosphate. Its function is as follows. Catalyzes the dephosphorylation of the nucleoside 5'-monophosphates deoxyadenosine monophosphate (dAMP), deoxycytidine monophosphate (dCMP), deoxyguanosine monophosphate (dGMP) and deoxythymidine monophosphate (dTMP). This is 5'-deoxynucleotidase hdd1 from Schizosaccharomyces pombe (strain 972 / ATCC 24843) (Fission yeast).